Here is a 159-residue protein sequence, read N- to C-terminus: NADH-quinone oxidoreductase subunit B (159 aa).

[4Fe-4S] cluster-binding residues include Cys-36, Cys-37, Cys-102, and Cys-132.

The protein belongs to the complex I 20 kDa subunit family. NDH-1 is composed of 14 different subunits. Subunits NuoB, C, D, E, F, and G constitute the peripheral sector of the complex. [4Fe-4S] cluster serves as cofactor.

It localises to the cell inner membrane. It catalyses the reaction a quinone + NADH + 5 H(+)(in) = a quinol + NAD(+) + 4 H(+)(out). Functionally, NDH-1 shuttles electrons from NADH, via FMN and iron-sulfur (Fe-S) centers, to quinones in the respiratory chain. Couples the redox reaction to proton translocation (for every two electrons transferred, four hydrogen ions are translocated across the cytoplasmic membrane), and thus conserves the redox energy in a proton gradient. The sequence is that of NADH-quinone oxidoreductase subunit B from Albidiferax ferrireducens (strain ATCC BAA-621 / DSM 15236 / T118) (Rhodoferax ferrireducens).